A 249-amino-acid chain; its full sequence is Anti-H(O) lectin 2 (249 aa).

N118 carries N-linked (GlcNAc...) asparagine glycosylation. 2 residues coordinate Mn(2+): E130 and D132. The Ca(2+) site is built by D132, Y134, N140, and D145. Residues D145 and H148 each contribute to the Mn(2+) site. The N-linked (GlcNAc...) asparagine glycan is linked to N245.

It belongs to the leguminous lectin family.

Di-N-acetylchitobiose specific lectin. The polypeptide is Anti-H(O) lectin 2 (Ulex europaeus (Furze)).